Reading from the N-terminus, the 379-residue chain is Queuine tRNA-ribosyltransferase (379 aa).

Residue D94 is the Proton acceptor of the active site. Substrate contacts are provided by residues 94–98 (DSGGF), D148, Q191, and G218. Residues 249 to 255 (GVGSPDS) are RNA binding. Catalysis depends on D268, which acts as the Nucleophile. Positions 273–277 (TRIAR) are RNA binding; important for wobble base 34 recognition. The Zn(2+) site is built by C306, C308, C311, and H337.

Belongs to the queuine tRNA-ribosyltransferase family. In terms of assembly, homodimer. Within each dimer, one monomer is responsible for RNA recognition and catalysis, while the other monomer binds to the replacement base PreQ1. It depends on Zn(2+) as a cofactor.

It catalyses the reaction 7-aminomethyl-7-carbaguanine + guanosine(34) in tRNA = 7-aminomethyl-7-carbaguanosine(34) in tRNA + guanine. The protein operates within tRNA modification; tRNA-queuosine biosynthesis. Catalyzes the base-exchange of a guanine (G) residue with the queuine precursor 7-aminomethyl-7-deazaguanine (PreQ1) at position 34 (anticodon wobble position) in tRNAs with GU(N) anticodons (tRNA-Asp, -Asn, -His and -Tyr). Catalysis occurs through a double-displacement mechanism. The nucleophile active site attacks the C1' of nucleotide 34 to detach the guanine base from the RNA, forming a covalent enzyme-RNA intermediate. The proton acceptor active site deprotonates the incoming PreQ1, allowing a nucleophilic attack on the C1' of the ribose to form the product. After dissociation, two additional enzymatic reactions on the tRNA convert PreQ1 to queuine (Q), resulting in the hypermodified nucleoside queuosine (7-(((4,5-cis-dihydroxy-2-cyclopenten-1-yl)amino)methyl)-7-deazaguanosine). The protein is Queuine tRNA-ribosyltransferase of Bacillus mycoides (strain KBAB4) (Bacillus weihenstephanensis).